A 1203-amino-acid polypeptide reads, in one-letter code: Chromosome partition protein Smc (1203 aa).

Residue 32-39 (PNGSGKSN) coordinates ATP. Coiled-coil stretches lie at residues 167-203 (ILKY…RQLK), 250-288 (MMRR…SVQQ), and 327-497 (DVLE…LERK). The SMC hinge domain maps to 511–622 (GLLGSIAKLV…VVNYLAEALG (112 aa)). 3 coiled-coil regions span residues 657 to 689 (EVTS…ALSE), 720 to 765 (RLGQ…NVEQ), and 976 to 1030 (YDRA…RKDL).

It belongs to the SMC family. As to quaternary structure, homodimer.

Its subcellular location is the cytoplasm. In terms of biological role, required for chromosome condensation and partitioning. This is Chromosome partition protein Smc from Mycobacterium leprae (strain TN).